The sequence spans 386 residues: Synaptotagmin-5 (386 aa).

Residues 1–16 (MFPEPPTPGPPSPDTP) show a composition bias toward pro residues. The tract at residues 1–23 (MFPEPPTPGPPSPDTPPDSSRIS) is disordered. The Vesicular portion of the chain corresponds to 1-24 (MFPEPPTPGPPSPDTPPDSSRISH). Residues 25–45 (GPVPPWALATIVLVSGLLIFS) traverse the membrane as a helical segment. Residues 46–386 (CCFCLYRKSC…PDRVRLLPAP (341 aa)) are Cytoplasmic-facing. 2 consecutive C2 domains span residues 108 to 227 (ELGR…QAWR) and 239 to 372 (KLGD…AQWH). The Ca(2+) site is built by Leu138, Asp139, Asp145, Asp197, Phe198, Asp199, Ser202, Asp205, Asp270, Asp276, Asp330, and Asp332.

The protein belongs to the synaptotagmin family. As to quaternary structure, homodimer. Interacts with both alpha- and beta-tubulin. Requires Ca(2+) as cofactor.

The protein resides in the cytoplasmic vesicle. The protein localises to the secretory vesicle. Its subcellular location is the synaptic vesicle membrane. It is found in the recycling endosome membrane. Functionally, may be involved in Ca(2+)-dependent exocytosis of secretory vesicles through Ca(2+) and phospholipid binding to the C2 domain or may serve as Ca(2+) sensors in the process of vesicular trafficking and exocytosis. Regulates the Ca(2+)-dependent secretion of norepinephrine in PC12 cells. Required for export from the endocytic recycling compartment to the cell surface. This Homo sapiens (Human) protein is Synaptotagmin-5 (SYT5).